A 237-amino-acid chain; its full sequence is Sugar fermentation stimulation protein homolog (237 aa).

Belongs to the SfsA family.

The chain is Sugar fermentation stimulation protein homolog from Pseudomonas putida (strain GB-1).